Here is a 239-residue protein sequence, read N- to C-terminus: Large ribosomal subunit protein uL1 (239 aa).

The protein belongs to the universal ribosomal protein uL1 family. In terms of assembly, part of the 50S ribosomal subunit.

Functionally, binds directly to 23S rRNA. The L1 stalk is quite mobile in the ribosome, and is involved in E site tRNA release. In terms of biological role, protein L1 is also a translational repressor protein, it controls the translation of the L11 operon by binding to its mRNA. This chain is Large ribosomal subunit protein uL1, found in Rickettsia canadensis (strain McKiel).